The primary structure comprises 538 residues: Retinoblastoma-binding protein 5 (538 aa).

WD repeat units lie at residues 22 to 63 (DCIS…KIIS) and 64 to 103 (AHIH…CDQR). A Glycyl lysine isopeptide (Lys-Gly) (interchain with G-Cter in SUMO2) cross-link involves residue lysine 129. WD repeat units follow at residues 148–188 (DDDS…LVAS), 196–235 (SNTT…TCGR), 249–291 (VNRT…KILH), and 293–331 (TRGE…NWSA). The residue at position 252 (threonine 252) is a Phosphothreonine; by CDK1. Residues 330 to 366 (SAFAPDFKELDENVEYEERESEFDIEDEDKSEPEQTG) form an interaction with ASH2L region. Residues 344 to 360 (EYEERESEFDIEDEDKS) show a composition bias toward acidic residues. Residues 344–377 (EYEERESEFDIEDEDKSEPEQTGADAAEDEEVDV) are disordered. Serine 350 is subject to Phosphoserine. The tract at residues 371-380 (EDEEVDVTSV) is interaction with WDR5. 2 positions are modified to phosphoserine: serine 388 and serine 389. Residues 408 to 519 (VEDPEENPYG…LPLEGSTKGK (112 aa)) form a disordered region. The span at 479 to 490 (SKKKQAGRPKGS) shows a compositional bias: basic residues. Basic and acidic residues predominate over residues 491–510 (KGKEKDSPFKPKLYKGDRGL). Serine 497 carries the phosphoserine; by CDK1 modification. Serine 525 carries the phosphoserine modification.

Component of the SET1 complex, at least composed of the catalytic subunit (SETD1A or SETD1B), WDR5, WDR82, RBBP5, ASH2L/ASH2, CXXC1/CFP1, HCFC1 and DPY30. Core component of several methyltransferase-containing complexes including MLL1/MLL, MLL2/3 (also named ASCOM complex) and MLL4/WBP7. Each complex is at least composed of ASH2L, RBBP5, WDR5, DPY30, one or more specific histone methyltransferases (KMT2A/MLL1, KMT2D/MLL2, KMT2C/MLL3 and KMT2B/MLL4), and the facultative components PAGR1, BACC1, CHD8, E2F6, HCFC1, HCFC2, HSP70, INO80C, KDM6A, KANSL1, LAS1L, MAX, MCRS1, MEN1, MGA, MYST1/MOF, NCOA6, PAXIP1/PTIP, PELP1, PHF20, PRP31, RING2, RUVB1/TIP49A, RUVB2/TIP49B, SENP3, TAF1, TAF4, TAF6, TAF7, TAF9, TEX10 and alpha- and beta-tubulin. Component of a histone methylation complex composed of at least ZNF335, RBBP5, ASH2L and WDR5; the complex may have histone H3-specific methyltransferase activity, however does not have specificity for 'Lys-4' of histone H3. Interacts with ZNF335. Interacts with ASH2L; the interaction is direct. Interacts with WDR5; the interaction is direct. Components of the ZNF335-RBBP5-ASH2L-WDR5 histone methylation complex may associate with components of a nuclear receptor-mediated transcription complex to form a complex at least composed of ZNF335, HCFC1, CCAR2, EMSY, MKI67, RBBP5, ASH2L and WDR5. Within this complex interacts with EMSY. Found in a complex with RBBP5, ASH2L, DPY30, KMT2A, KMT2D and WDR5. Interacts with SETD1A. Interacts with WDR82.

The protein localises to the nucleus. Its function is as follows. In embryonic stem (ES) cells, plays a crucial role in the differentiation potential, particularly along the neural lineage, regulating gene induction and H3 'Lys-4' methylation at key developmental loci, including that mediated by retinoic acid. Does not affect ES cell self-renewal. Component or associated component of some histone methyltransferase complexes which regulates transcription through recruitment of those complexes to gene promoters. As part of the MLL1/MLL complex, involved in mono-, di- and trimethylation at 'Lys-4' of histone H3. Histone H3 'Lys-4' methylation represents a specific tag for epigenetic transcriptional activation. In association with ASH2L and WDR5, stimulates the histone methyltransferase activities of KMT2A, KMT2B, KMT2C, KMT2D, SETD1A and SETD1B. The chain is Retinoblastoma-binding protein 5 (Rbbp5) from Mus musculus (Mouse).